The sequence spans 240 residues: Transcription factor bHLH47 (240 aa).

Residues 1-13 (MVSKTPSTSSDEA) show a composition bias toward polar residues. The segment at 1 to 26 (MVSKTPSTSSDEANATADERCRKGKV) is disordered. The region spanning 27–77 (PKRINKAVRERLKREHLNELFIELADTLELNQQNSGKASILCEATRFLKDV) is the bHLH domain. A coiled-coil region spans residues 98–131 (VTTEKNELKEETSVLETEISKLQNEIEARANQSK). Positions 128-138 (NQSKPDLNTSP) are enriched in polar residues. Positions 128–153 (NQSKPDLNTSPAPEYHHHHYQQQHPE) are disordered.

In terms of assembly, homodimer. Forms heterodimer with PYEL proteins bHLH115, bHLH104 and ILR3. In terms of tissue distribution, expressed constitutively in roots, leaves, stems, and flowers.

It is found in the nucleus. This Arabidopsis thaliana (Mouse-ear cress) protein is Transcription factor bHLH47 (BHLH47).